The primary structure comprises 175 residues: Nucleoplasmin-3 (175 aa).

Position 2 is an N-acetylalanine (Ala-2). A Phosphoserine modification is found at Ser-16. An Omega-N-methylarginine modification is found at Arg-27. Residues Ser-147 and Ser-151 each carry the phosphoserine modification.

This sequence belongs to the nucleoplasmin family. In terms of assembly, interacts with NPM (via N-terminus). Forms a pentamer with NPM at a ratio 4:1 (NPM3/NPM). Two pentamers form a decamer. In terms of processing, phosphorylated. Predominantly expressed in testis.

It localises to the nucleus. The protein resides in the nucleolus. Its function is as follows. Plays a role in the regulation of diverse cellular processes such as ribosome biogenesis, chromatin remodeling or protein chaperoning. Modulates the histone chaperone function and the RNA-binding activity of nucleolar phosphoprotein B23/NPM. Efficiently mediates chromatin remodeling when included in a pentamer containing NPM3 and NPM. The chain is Nucleoplasmin-3 (Npm3) from Mus musculus (Mouse).